We begin with the raw amino-acid sequence, 297 residues long: MTDTNPENVNNSKITIICSAPDLASQNIKKHLLALREWKPLELPENSGFSAVLESADGKFRLVDIEEIHVFQDGLDKKLEAAGLPAELIIFASKHRSKEEVKSLTVHCTGNSSNEARLGGHPKELAVSSPPAMKSILMEMKRLAKVKGLDYDVTLEVTHHGPTELNVPSLYAEIGSTEGQWEEPVPGEIVARAILTVSLEKVPTAVGFGGGHYAMRQTGLLLETAISFGHNFPKYQLEFVDEALIRQAVEKSNAEFAYFDRKSMKSADRKRISQILEKLGLKVLKESEIREKYGREE.

It belongs to the DtdA deacylase family. Monomer. The cofactor is Zn(2+).

The enzyme catalyses a D-aminoacyl-tRNA + H2O = a tRNA + a D-alpha-amino acid + H(+). It carries out the reaction glycyl-tRNA(Ala) + H2O = tRNA(Ala) + glycine + H(+). D-aminoacyl-tRNA deacylase with broad substrate specificity. By recycling D-aminoacyl-tRNA to D-amino acids and free tRNA molecules, this enzyme counteracts the toxicity associated with the formation of D-aminoacyl-tRNA entities in vivo. The protein is D-aminoacyl-tRNA deacylase of Methanosarcina acetivorans (strain ATCC 35395 / DSM 2834 / JCM 12185 / C2A).